Reading from the N-terminus, the 1195-residue chain is Voltage-gated inwardly rectifying potassium channel KCNH7 (1195 aa).

Residues 1–412 (MPVRRGHVAP…YSPFKAVWDW (412 aa)) are Cytoplasmic-facing. The region spanning 41 to 70 (IIYCNDGFCEMTGFSRPDVMQKPCTCDFLH) is the PAS domain. The PAC domain occupies 92-144 (RKVEVTYYHKNGSTFICNTHIIPVKNQEGVAMMFIINFEYVTDEENAATPERV). S174 is subject to Phosphoserine. The tract at residues 194–216 (SVAMKHFKSPTKESCSPSEADDT) is disordered. Phosphoserine occurs at positions 238 and 319. Residues 413–433 (LILLLVIYTAIFTPYSAAFLL) traverse the membrane as a helical segment. The Extracellular portion of the chain corresponds to 434–449 (NDREEQKRRECGYSCS). The chain crosses the membrane as a helical span at residues 450 to 470 (PLNVVDLIVDIMFIIDILINF). The Cytoplasmic portion of the chain corresponds to 471–494 (RTTYVNQNEEVVSDPAKIAIHYFK). The chain crosses the membrane as a helical span at residues 495 to 515 (GWFLIDMVAAIPFDLLIFGSG). Residues 516-521 (SDETTT) lie on the Extracellular side of the membrane. Residues 522-542 (LIGLLKTARLLRLVRVARKLD) traverse the membrane as a helical; Voltage-sensor segment. At 543–549 (RYSEYGA) the chain is on the cytoplasmic side. A helical membrane pass occupies residues 550 to 570 (AVLMLLMCIFALIAHWLACIW). Residues 571 to 614 (YAIGNVERPYLTDKIGWLDSLGTQIGKRYNDSDSSSGPSIKDKY) lie on the Extracellular side of the membrane. An N-linked (GlcNAc...) asparagine glycan is attached at N600. Residues 615–635 (VTALYFTFSSLTSVGFGNVSP) constitute an intramembrane region (pore-forming). Residues 627-632 (SVGFGN) carry the Selectivity filter motif. Over 636-641 (NTNSEK) the chain is Extracellular. The chain crosses the membrane as a helical span at residues 642–662 (IFSICVMLIGSLMYASIFGNV). Residues 663-1195 (SAIIQRLYSG…HVSDPGLPGK (533 aa)) are Cytoplasmic-facing. The cNMP-binding domain stretch occupies residues 745-845 (AFRGASKGCL…IQREDLLEVL (101 aa)). The tract at residues 870-915 (AKSQSVNDSEGDTGKLRRRRLSFESEGEKDFSKENSANDADDSTDT) is disordered. Residues 890–902 (LSFESEGEKDFSK) are compositionally biased toward basic and acidic residues. Phosphoserine is present on residues S891 and S894. Positions 1027 to 1054 (YGEVEQRLDLLQEQLNRLESQMTTDIQA) form a coiled coil.

The protein belongs to the potassium channel family. H (Eag) (TC 1.A.1.20) subfamily. Kv11.3/KCNH7 sub-subfamily. As to quaternary structure, the potassium channel is probably composed of a homo- or heterotetrameric complex of pore-forming alpha subunits that can associate only within their subfamily.

It is found in the cell membrane. It carries out the reaction K(+)(in) = K(+)(out). In terms of biological role, pore-forming (alpha) subunit of voltage-gated inwardly rectifying potassium channel. Exhibits faster activation and deactivation kinetics and slow inactivation at membrane potentials positive to 240 mV, resulting in the weakest inward rectification. The protein is Voltage-gated inwardly rectifying potassium channel KCNH7 of Mus musculus (Mouse).